The following is a 404-amino-acid chain: ORC1-type DNA replication protein 2 (404 aa).

Residues 64–68 (TGKTS), Y205, and R217 each bind ATP.

Belongs to the CDC6/cdc18 family. Interacts with MCM.

Its function is as follows. Involved in regulation of DNA replication. Stimulates the helicase activity of MCM via stimulation of its ATPase activity. Binding to MCM may result in conformational changes in MCM, leading to catalytic ATP hydrolysis by the helicase. Directly stimulates MCM movement along single-stranded and double-stranded DNA. Does not bind DNA. The protein is ORC1-type DNA replication protein 2 (cdc6-2) of Thermoplasma acidophilum (strain ATCC 25905 / DSM 1728 / JCM 9062 / NBRC 15155 / AMRC-C165).